The sequence spans 133 residues: Probable non-specific lipid-transfer protein 2 (133 aa).

An N-terminal signal peptide occupies residues 1–31 (MRTVSMAALVVIAAALAWTSSAELASAPAPG). 4 cysteine pairs are disulfide-bonded: Cys-35/Cys-83, Cys-45/Cys-60, Cys-61/Cys-106, and Cys-81/Cys-121.

This sequence belongs to the plant LTP family.

Functionally, plant non-specific lipid-transfer proteins transfer phospholipids as well as galactolipids across membranes. May play a role in wax or cutin deposition in the cell walls of expanding epidermal cells and certain secretory tissues. This is Probable non-specific lipid-transfer protein 2 from Parietaria judaica (Pellitory-of-the-wall).